A 184-amino-acid chain; its full sequence is Ethylene-responsive transcription factor ERF122 (184 aa).

The AP2/ERF DNA-binding region spans 120-177 (KYKGVRKKPSGKWAAEIWDPRSKSRRWLGTFLTAEMAAQSYNDAAAEYRARRGKTNGE).

The protein belongs to the AP2/ERF transcription factor family. ERF subfamily.

It localises to the nucleus. Probably acts as a transcriptional activator. Binds to the GCC-box pathogenesis-related promoter element. May be involved in the regulation of gene expression by stress factors and by components of stress signal transduction pathways. The sequence is that of Ethylene-responsive transcription factor ERF122 (ERF122) from Arabidopsis thaliana (Mouse-ear cress).